The sequence spans 225 residues: Myelin-associated neurite-outgrowth inhibitor (225 aa).

The Cytoplasmic portion of the chain corresponds to 1 to 58 (MNPVYSPGSSGVPYANAKGIGYPAGFPMGYAAAAPAYSPNMYAGPNPAFQQELEHPAH). A helical membrane pass occupies residues 59–75 (VSSGVQMFMFGHAFSVA). Residues 76–173 (RNGAIPSGYT…PAPIQSPRGN (98 aa)) are Extracellular-facing. The helical transmembrane segment at 174-193 (GVAMGMVAGTTMAMSAGTLL) threads the bilayer. Residues 194–225 (TSHYPSPVAPQVTMPTYRPPGTPTYSYVPPQW) are Cytoplasmic-facing.

The protein belongs to the FAM168 family.

It is found in the cytoplasm. The protein resides in the perinuclear region. It localises to the cell membrane. Its subcellular location is the cell projection. The protein localises to the axon. Inhibitor of neuronal axonal outgrowth. This chain is Myelin-associated neurite-outgrowth inhibitor (fam168b), found in Xenopus laevis (African clawed frog).